The following is a 249-amino-acid chain: MYLNIAYPRNGTVKQFEISDEVLRRVQLQDYRLGNEVDGAIFGSEFKGYIFRLRGGSDKDGFPMVPGVLASSRVSLLVKRGAIGFNTFRGYQGERRRKNVRGCVLASDIALVNVTISKVGDQPIEGVTDTTAPRRLGPKRASKIRKLFNLSRTEDVRKYVVRRRVVKSGKKDRLKAPKIQRLITPRVKARRAKKAKDAIAKVRASAAERREYLRLIASNRRALRQRDHSKKHTQKVHAQRAEVAAFQKK.

Basic residues predominate over residues 223 to 238 (LRQRDHSKKHTQKVHA). The segment at 223–249 (LRQRDHSKKHTQKVHAQRAEVAAFQKK) is disordered.

Belongs to the eukaryotic ribosomal protein eS6 family. As to quaternary structure, component of the small ribosomal subunit. Part of the small subunit (SSU) processome, composed of more than 70 proteins and the RNA chaperone small nucleolar RNA (snoRNA) U3. Post-translationally, ribosomal protein S6 is the major substrate of protein kinases in eukaryote ribosomes.

Its subcellular location is the cytoplasm. The protein localises to the nucleus. The protein resides in the nucleolus. Its function is as follows. Component of the 40S small ribosomal subunit. Plays an important role in controlling cell growth and proliferation through the selective translation of particular classes of mRNA. Part of the small subunit (SSU) processome, first precursor of the small eukaryotic ribosomal subunit. During the assembly of the SSU processome in the nucleolus, many ribosome biogenesis factors, an RNA chaperone and ribosomal proteins associate with the nascent pre-rRNA and work in concert to generate RNA folding, modifications, rearrangements and cleavage as well as targeted degradation of pre-ribosomal RNA by the RNA exosome. In Leishmania infantum, this protein is Small ribosomal subunit protein eS6 (RPS6).